We begin with the raw amino-acid sequence, 158 residues long: Small ribosomal subunit protein uS9 (158 aa).

It belongs to the universal ribosomal protein uS9 family.

In Nitrobacter hamburgensis (strain DSM 10229 / NCIMB 13809 / X14), this protein is Small ribosomal subunit protein uS9.